We begin with the raw amino-acid sequence, 153 residues long: Large ribosomal subunit protein uL30 (153 aa).

It belongs to the universal ribosomal protein uL30 family. As to quaternary structure, part of the 50S ribosomal subunit.

The polypeptide is Large ribosomal subunit protein uL30 (Methanosarcina barkeri (strain Fusaro / DSM 804)).